Here is a 157-residue protein sequence, read N- to C-terminus: Cell cycle regulator of non-homologous end joining (157 aa).

Methionine 1 is subject to N-acetylmethionine. The KBM signature appears at 1–21; that stretch reads METLKSKTKTRVLPSWMTAPV. Residues 80–91 show a composition bias toward basic and acidic residues; it reads KPWEQRSLEATD. The segment at 80 to 148 is disordered; sequence KPWEQRSLEA…EEEKEEEDAL (69 aa). Low complexity predominate over residues 96-106; that stretch reads SPPCSSSPGSS. Positions 147-157 match the XLM motif; that stretch reads ALKYVREIFFS.

As to quaternary structure, interacts (via KBM motif) with XRCC5/Ku80 and XRCC6/Ku70 heterodimer. Interacts (via XLF motif) with TRIM28/KAP1, ATM, MRE11, NBN and RAD50. Interacts with splicing factor SF3B1. Interacts with ERCC6L2; this interaction is DNA independent.

It localises to the cytoplasm. The protein resides in the nucleus. The protein localises to the chromosome. In terms of biological role, cell-cycle-specific regulator of classical non-homologous end joining (NHEJ) of DNA double-strand break (DSB) repair, which can act both as an activator or inhibitor of NHEJ, depending on the cell cycle phase. Acts as a regulator of DNA repair pathway choice by specifically inhibiting classical NHEJ during the S and G2 phases, thereby promoting error-free repair by homologous recombination during cell cycle phases when sister chromatids are present. Preferentially protects single-stranded overhangs at break sites by inhibiting classical NHEJ, thereby creating a local environment that favors homologous recombination. Acts via interaction with XRCC5/Ku80 and XRCC6/Ku70. In contrast, acts as an activator of NHEJ during G1 phase of the cell cycle: promotes classical NHEJ in G1 phase cells via multivalent interactions that increase the affinity of DNA damage response proteins for DSB-associated chromatin. Also involved in immunoglobulin V(D)J recombination. May also act as an indirect regulator of proteasome. This is Cell cycle regulator of non-homologous end joining from Mus musculus (Mouse).